The following is a 107-amino-acid chain: UPF0060 membrane protein mll7841 (107 aa).

Helical transmembrane passes span 4-24, 30-50, 60-80, and 87-107; these read LFYT…WAWW, PLWL…LALV, AAYG…VEGV, and LAGA…PRGA.

This sequence belongs to the UPF0060 family.

The protein resides in the cell inner membrane. The polypeptide is UPF0060 membrane protein mll7841 (Mesorhizobium japonicum (strain LMG 29417 / CECT 9101 / MAFF 303099) (Mesorhizobium loti (strain MAFF 303099))).